A 513-amino-acid polypeptide reads, in one-letter code: Leucine-rich repeat-containing protein 24 (513 aa).

The first 20 residues, 1–20 (MALRAPALLPLLLLLLPLRA), serve as a signal peptide directing secretion. Residues 21-50 (AGCPAACRCYSATVECGALRLRVVPLGIPP) form the LRRNT domain. LRR repeat units lie at residues 51–72 (GTQT…ALAP), 75–96 (ALRR…AFRA), 99–120 (RLLE…AFVG), 123–144 (QLRV…TFLH), 147–168 (RLQE…ALAG), and 171–192 (SLAL…ALQP). The region spanning 204–259 (NPWRCDCALHWLGAWIKEGGQRLLTSRDRKIMCAEPPRLALQSLLDVSHSSLICIP) is the LRRCT domain. Residues 260 to 361 (PSVHVQPLEL…GAARVPFRLL (102 aa)) enclose the Ig-like C2-type domain. Cysteines 281 and 345 form a disulfide. N-linked (GlcNAc...) asparagine glycosylation is found at asparagine 334 and asparagine 363. The tract at residues 365–391 (SRQQPQQPAQPPPPAARPAGSEPRPEA) is disordered. A helical membrane pass occupies residues 406 to 426 (AIAAAIALLALTALLLVAMIC).

Its subcellular location is the membrane. This Homo sapiens (Human) protein is Leucine-rich repeat-containing protein 24 (LRRC24).